The following is a 262-amino-acid chain: Tryptophan synthase alpha chain (262 aa).

Active-site proton acceptor residues include E51 and D62.

Belongs to the TrpA family. As to quaternary structure, tetramer of two alpha and two beta chains.

The enzyme catalyses (1S,2R)-1-C-(indol-3-yl)glycerol 3-phosphate + L-serine = D-glyceraldehyde 3-phosphate + L-tryptophan + H2O. Its pathway is amino-acid biosynthesis; L-tryptophan biosynthesis; L-tryptophan from chorismate: step 5/5. The alpha subunit is responsible for the aldol cleavage of indoleglycerol phosphate to indole and glyceraldehyde 3-phosphate. This chain is Tryptophan synthase alpha chain, found in Oceanobacillus iheyensis (strain DSM 14371 / CIP 107618 / JCM 11309 / KCTC 3954 / HTE831).